The following is a 161-amino-acid chain: 2-C-methyl-D-erythritol 2,4-cyclodiphosphate synthase (161 aa).

The a divalent metal cation site is built by Asp-10 and His-12. 4-CDP-2-C-methyl-D-erythritol 2-phosphate is bound by residues 10–12 and 36–37; these read DVH and HS. Position 44 (His-44) interacts with a divalent metal cation. 4-CDP-2-C-methyl-D-erythritol 2-phosphate is bound by residues 58-60, 134-137, Phe-141, and Arg-144; these read DIG and TTTE.

This sequence belongs to the IspF family. In terms of assembly, homotrimer. The cofactor is a divalent metal cation.

It catalyses the reaction 4-CDP-2-C-methyl-D-erythritol 2-phosphate = 2-C-methyl-D-erythritol 2,4-cyclic diphosphate + CMP. The protein operates within isoprenoid biosynthesis; isopentenyl diphosphate biosynthesis via DXP pathway; isopentenyl diphosphate from 1-deoxy-D-xylulose 5-phosphate: step 4/6. In terms of biological role, involved in the biosynthesis of isopentenyl diphosphate (IPP) and dimethylallyl diphosphate (DMAPP), two major building blocks of isoprenoid compounds. Catalyzes the conversion of 4-diphosphocytidyl-2-C-methyl-D-erythritol 2-phosphate (CDP-ME2P) to 2-C-methyl-D-erythritol 2,4-cyclodiphosphate (ME-CPP) with a corresponding release of cytidine 5-monophosphate (CMP). This Parabacteroides distasonis (strain ATCC 8503 / DSM 20701 / CIP 104284 / JCM 5825 / NCTC 11152) protein is 2-C-methyl-D-erythritol 2,4-cyclodiphosphate synthase.